Reading from the N-terminus, the 151-residue chain is Large ribosomal subunit protein uL13 (151 aa).

It belongs to the universal ribosomal protein uL13 family. Part of the 50S ribosomal subunit.

Its function is as follows. This protein is one of the early assembly proteins of the 50S ribosomal subunit, although it is not seen to bind rRNA by itself. It is important during the early stages of 50S assembly. In Picosynechococcus sp. (strain ATCC 27264 / PCC 7002 / PR-6) (Agmenellum quadruplicatum), this protein is Large ribosomal subunit protein uL13.